Here is a 1220-residue protein sequence, read N- to C-terminus: DNA-directed RNA polymerase subunit beta (1220 aa).

Belongs to the RNA polymerase beta chain family. In terms of assembly, the RNAP catalytic core consists of 2 alpha, 1 beta, 1 beta' and 1 omega subunit. When a sigma factor is associated with the core the holoenzyme is formed, which can initiate transcription.

It carries out the reaction RNA(n) + a ribonucleoside 5'-triphosphate = RNA(n+1) + diphosphate. Functionally, DNA-dependent RNA polymerase catalyzes the transcription of DNA into RNA using the four ribonucleoside triphosphates as substrates. This is DNA-directed RNA polymerase subunit beta from Mesomycoplasma hyopneumoniae (strain 7448) (Mycoplasma hyopneumoniae).